A 458-amino-acid chain; its full sequence is Elongation factor 1-alpha (458 aa).

The residue at position 2 (Gly2) is a N,N,N-trimethylglycine. Lys3 is subject to N6,N6-dimethyllysine; alternate. Lys3 bears the N6-methyllysine; alternate mark. A tr-type G domain is found at Lys5 to Ser240. The interval Gly14–Ser21 is G1. Gly14–Ser21 is a binding site for GTP. An N6-methyllysine modification is found at Lys30. The segment at Gly70–Asp74 is G2. Lys79 is modified (N6,N6,N6-trimethyllysine). The G3 stretch occupies residues Asp91–Gly94. Residues Asp91–His95 and Asn153–Asp156 contribute to the GTP site. Positions Asn153–Asp156 are G4. The segment at Ser192 to Trp194 is G5. Lys316 is subject to N6,N6-dimethyllysine; alternate. An N6-methyllysine; alternate modification is found at Lys316. Lys390 carries the post-translational modification N6-methyllysine.

This sequence belongs to the TRAFAC class translation factor GTPase superfamily. Classic translation factor GTPase family. EF-Tu/EF-1A subfamily.

Its subcellular location is the cytoplasm. Functionally, this protein promotes the GTP-dependent binding of aminoacyl-tRNA to the A-site of ribosomes during protein biosynthesis. This chain is Elongation factor 1-alpha (TEF-2), found in Mucor circinelloides f. lusitanicus (Mucor racemosus var. lusitanicus).